The primary structure comprises 83 residues: Alpha-toxin CvIV4 (83 aa).

An N-terminal signal peptide occupies residues 1–19 (MNYFILILVAALLILDVNC). The LCN-type CS-alpha/beta domain occupies 21-79 (KDGYPVEHSGCKYTCWKNEYCDKVCKDLKGEGGYCYINLTCWCTGLPDNVPLKTNQRCN). 4 cysteine pairs are disulfide-bonded: C31/C78, C35/C55, C41/C61, and C45/C63.

Belongs to the long (4 C-C) scorpion toxin superfamily. Sodium channel inhibitor family. Expressed by the venom gland.

It localises to the secreted. Functionally, this toxin significantly slows the fast inactivation of Nav1.2/SCN2A (EC(50)=580 nM), Nav1.3/SCN3A (EC(50)=1310 nM), Nav1.4/SCN4A (EC(50)=530 nM), and Nav1.7/SCN9A (EC(50)=1340 nM). The toxin does not affect the peak amplitude of Nav1.7 currents. On all channels cited above, the toxin requires depolarizing potentials to slow channel inactivation. In addition, the toxin has no or very weak effects on the voltage-dependence of steady-state inactivation, and on voltage-dependence of activation. In vivo, it produces paw licking in mice equivalent to the effects of whole venom. This Centruroides vittatus (Striped bark scorpion) protein is Alpha-toxin CvIV4.